A 715-amino-acid chain; its full sequence is Interferon-induced GTP-binding protein Mx2 (715 aa).

Positions 1–14 (MSKAHKSWPHRRRN) are enriched in basic residues. Disordered stretches follow at residues 1–24 (MSKA…SLKK) and 69–88 (NNQP…PENN). A compositionally biased stretch (polar residues) spans 69-80 (NNQPLPGNTSQP). The region spanning 115–387 (DLALPAIAVI…LITHIQKSLP (273 aa)) is the Dynamin-type G domain. Residues 125–132 (GDQSSGKS) are G1 motif. 125–132 (GDQSSGKS) contributes to the GTP binding site. A G2 motif region spans residues 150–152 (VTR). The G3 motif stretch occupies residues 225-228 (DLPG). GTP is bound by residues 225 to 229 (DLPGI) and 294 to 297 (TKPD). Residues 294 to 297 (TKPD) form a G4 motif region. A G5 motif region spans residues 326–329 (KCRG). The region spanning 623 to 714 (FNEIGVHLNA…ALCQFSSKEI (92 aa)) is the GED domain.

The protein belongs to the TRAFAC class dynamin-like GTPase superfamily. Dynamin/Fzo/YdjA family.

The protein resides in the cytoplasm. Its subcellular location is the nucleus. Its function is as follows. Interferon-induced dynamin-like GTPase with antiviral activity. The chain is Interferon-induced GTP-binding protein Mx2 (MX2) from Macaca mulatta (Rhesus macaque).